A 318-amino-acid polypeptide reads, in one-letter code: Ankyrin repeat domain-containing protein 1 (318 aa).

The stretch at 37–77 forms a coiled coil; the sequence is ALEKQEDLKTTSKSLIELEEEKQIKEKQLKSELLKKKLEER. ANK repeat units follow at residues 118 to 147, 151 to 180, 184 to 213, 217 to 246, 250 to 279, and 283 to 314; these read VDQT…DPNT, YKRT…NIEF, LEST…AINA, LLST…DLHA, EGDT…DLNI, and AGKT…KNSH.

The protein localises to the nucleus. Functionally, may act as a nuclear transcription factor that negatively regulates the expression of cardiac genes. This is Ankyrin repeat domain-containing protein 1 (ankrd1) from Xenopus tropicalis (Western clawed frog).